The sequence spans 140 residues: Putative pre-16S rRNA nuclease (140 aa).

The protein belongs to the YqgF nuclease family.

Its subcellular location is the cytoplasm. Its function is as follows. Could be a nuclease involved in processing of the 5'-end of pre-16S rRNA. The protein is Putative pre-16S rRNA nuclease of Halothermothrix orenii (strain H 168 / OCM 544 / DSM 9562).